Consider the following 374-residue polypeptide: DNA replication and repair protein RecF (374 aa).

34 to 41 (GNNGAGKT) is a binding site for ATP.

Belongs to the RecF family.

The protein resides in the cytoplasm. In terms of biological role, the RecF protein is involved in DNA metabolism; it is required for DNA replication and normal SOS inducibility. RecF binds preferentially to single-stranded, linear DNA. It also seems to bind ATP. This chain is DNA replication and repair protein RecF, found in Rhizobium etli (strain CIAT 652).